A 128-amino-acid chain; its full sequence is Cytochrome c-type biogenesis protein CcmE (128 aa).

Residues 1-8 lie on the Cytoplasmic side of the membrane; sequence MQKIVRNR. The chain crosses the membrane as a helical; Signal-anchor for type II membrane protein span at residues 9–29; it reads LIKIILCFCSTCLGISIILYN. Over 30–128 the chain is Periplasmic; sequence LEKNIIFFFP…KHDENYRPPS (99 aa). Heme contacts are provided by histidine 120 and tyrosine 124.

It belongs to the CcmE/CycJ family.

It localises to the cell inner membrane. Heme chaperone required for the biogenesis of c-type cytochromes. Transiently binds heme delivered by CcmC and transfers the heme to apo-cytochromes in a process facilitated by CcmF and CcmH. The protein is Cytochrome c-type biogenesis protein CcmE of Rickettsia typhi (strain ATCC VR-144 / Wilmington).